Consider the following 368-residue polypeptide: MTPRRCLIAAGGTGGHMFPARAAAEALIARGWQVRLVTDARGLRHATDFPAVAVDEIHAASPSTKNPLKLARAALELTQGFAQARSIVGKWKPDVIAGFGGYPAFPALAVARSMGIAFAIHEQNAVLGRVNRVFAAKAGFVASGFERLDRLPAKAKKRHILTGNPLRAPILAARDAGYPAIDADGRLNILVLGGSLGARILSETVPQALAMVPEKLRSRLDVVQQTREESLPMARETYQAAGIAAQCEPFFEDVGSLYAASHLVIGRAGASTVSEVAGVGRPAIFCPLAIAADDHQSANVDGLVQAVACDVVHEGEFTAQKIAALIETRLSNPDDLASRAQSARALGRPDAADALARAVDGLVTGALV.

Residues 13 to 15, asparagine 124, arginine 167, serine 195, and glutamine 296 each bind UDP-N-acetyl-alpha-D-glucosamine; that span reads TGG.

This sequence belongs to the glycosyltransferase 28 family. MurG subfamily.

Its subcellular location is the cell inner membrane. It catalyses the reaction di-trans,octa-cis-undecaprenyl diphospho-N-acetyl-alpha-D-muramoyl-L-alanyl-D-glutamyl-meso-2,6-diaminopimeloyl-D-alanyl-D-alanine + UDP-N-acetyl-alpha-D-glucosamine = di-trans,octa-cis-undecaprenyl diphospho-[N-acetyl-alpha-D-glucosaminyl-(1-&gt;4)]-N-acetyl-alpha-D-muramoyl-L-alanyl-D-glutamyl-meso-2,6-diaminopimeloyl-D-alanyl-D-alanine + UDP + H(+). It functions in the pathway cell wall biogenesis; peptidoglycan biosynthesis. In terms of biological role, cell wall formation. Catalyzes the transfer of a GlcNAc subunit on undecaprenyl-pyrophosphoryl-MurNAc-pentapeptide (lipid intermediate I) to form undecaprenyl-pyrophosphoryl-MurNAc-(pentapeptide)GlcNAc (lipid intermediate II). The polypeptide is UDP-N-acetylglucosamine--N-acetylmuramyl-(pentapeptide) pyrophosphoryl-undecaprenol N-acetylglucosamine transferase (Maricaulis maris (strain MCS10) (Caulobacter maris)).